Here is a 450-residue protein sequence, read N- to C-terminus: Exodeoxyribonuclease 7 large subunit (450 aa).

The protein belongs to the XseA family. In terms of assembly, heterooligomer composed of large and small subunits.

The protein localises to the cytoplasm. The catalysed reaction is Exonucleolytic cleavage in either 5'- to 3'- or 3'- to 5'-direction to yield nucleoside 5'-phosphates.. Bidirectionally degrades single-stranded DNA into large acid-insoluble oligonucleotides, which are then degraded further into small acid-soluble oligonucleotides. The chain is Exodeoxyribonuclease 7 large subunit from Listeria welshimeri serovar 6b (strain ATCC 35897 / DSM 20650 / CCUG 15529 / CIP 8149 / NCTC 11857 / SLCC 5334 / V8).